Reading from the N-terminus, the 548-residue chain is Membrane protein insertase YidC (548 aa).

Residues 6-26 (NLLVIALLFVSFMIWQAWEQD) form a helical membrane-spanning segment. Positions 28 to 55 (NPQPQAQQTTQTTTTAAGSAADQGVPAS) are disordered. The span at 30–50 (QPQAQQTTQTTTTAAGSAADQ) shows a compositional bias: low complexity. 4 consecutive transmembrane segments (helical) span residues 350-370 (FVGN…GIMY), 420-440 (LGGC…YYML), 458-478 (LSAQ…MFFI), and 499-519 (PVIF…YYIV).

Belongs to the OXA1/ALB3/YidC family. Type 1 subfamily. As to quaternary structure, interacts with the Sec translocase complex via SecD. Specifically interacts with transmembrane segments of nascent integral membrane proteins during membrane integration.

The protein resides in the cell inner membrane. In terms of biological role, required for the insertion and/or proper folding and/or complex formation of integral membrane proteins into the membrane. Involved in integration of membrane proteins that insert both dependently and independently of the Sec translocase complex, as well as at least some lipoproteins. Aids folding of multispanning membrane proteins. The sequence is that of Membrane protein insertase YidC from Escherichia coli O127:H6 (strain E2348/69 / EPEC).